Here is a 254-residue protein sequence, read N- to C-terminus: Alcohol dehydrogenase 1 (254 aa).

10–33 (FVAGLGGIGFDTSREIVKSGPKNL) serves as a coordination point for NAD(+). Serine 138 serves as a coordination point for substrate. Tyrosine 151 (proton acceptor) is an active-site residue.

Belongs to the short-chain dehydrogenases/reductases (SDR) family. Homodimer.

The enzyme catalyses a primary alcohol + NAD(+) = an aldehyde + NADH + H(+). It carries out the reaction a secondary alcohol + NAD(+) = a ketone + NADH + H(+). The polypeptide is Alcohol dehydrogenase 1 (Adh1) (Drosophila navojoa (Fruit fly)).